Here is a 264-residue protein sequence, read N- to C-terminus: Hydroxyethylthiazole kinase (264 aa).

Met-55 contacts substrate. The ATP site is built by Arg-130 and Ser-176. A substrate-binding site is contributed by Gly-203.

This sequence belongs to the Thz kinase family. Requires Mg(2+) as cofactor.

The catalysed reaction is 5-(2-hydroxyethyl)-4-methylthiazole + ATP = 4-methyl-5-(2-phosphooxyethyl)-thiazole + ADP + H(+). The protein operates within cofactor biosynthesis; thiamine diphosphate biosynthesis; 4-methyl-5-(2-phosphoethyl)-thiazole from 5-(2-hydroxyethyl)-4-methylthiazole: step 1/1. Catalyzes the phosphorylation of the hydroxyl group of 4-methyl-5-beta-hydroxyethylthiazole (THZ). This Leptospira borgpetersenii serovar Hardjo-bovis (strain JB197) protein is Hydroxyethylthiazole kinase.